The following is a 1093-amino-acid chain: MKEMVGGCCVCSDERGWAENPLVYCDGHACSVAVHQACYGIVQVPTGPWFCRKCESQERAARVRCELCPHKDGALKRTDNGGWAHVVCALYIPEVQFANVLTMEPIVLQYVPHDRFNKTCYICEEQGRESKAASGACMTCNRHGCRQAFHVTCAQMAGLLCEEEVLEVDNVKYCGYCKYHFSKMKTSRHSSGGGGGGAGGGGGSMGGGGSGFISGRRSRSASPSTQQEKHPTHHERGQKKSRKDKERLKQKHKKRPESPPSILTPPVVPTADKVSSSASSSSHHEASTQETSESSRESKGKKSSSHSLSHKGKKLSSGKGVSSFTSASSSSSSSSSSSGGPFQPAVSSLQSSPDFSAFPKLEQPEEDKYSKPTAPAPSAPPSPSAPEPPKADLFEQKVVFSGFGPIMRFSTTTSSSGRARAPSPGDYKSPHVTGSGASAGTHKRMPALSATPVPADETPETGLKEKKHKASKRSRHGPGRPKGSRNKEGTGGPAAPSLPSAQLAGFTATAASPFSGGSLVSSGLGGLSSRTFGPSGSLPSLSLESPLLGAGIYTSNKDPISHSGGMLRAVCSTPLSSSLLGPPGTSALPRLSRSPFTSTLPSSSASISTTQVFSLAGSTFSLPSTHIFGTPMGAVNPLLSQAESSHTEPDLEDCSFRCRGTSPQESLSSMSPISSLPALFDQTASAPCGGGQLDPAAPGTTNMEQLLEKQGDGEAGVNIVEMLKALHALQKENQRLQEQILSLTAKKERLQILNVQLSVPFPALPAALPAANGPVPGPYGLPPQAGSSDSLSTSKSPPGKSSLGLDNSLSTSSEDPHSGCPSRSSSSLSFHSTPPPLPLLQQSPATLPLALPGAPAPLPPQPQNGLGRAPGAAGLGAMPMAEGLLGGLAGSGGLPLNGLLGGLNGAAAPNPASLSQAGGAPTLQLPGCLNSLTEQQRHLLQQQEQQLQQLQQLLASPQLTPEHQTVVYQMIQQIQQKRELQRLQMAGGSQLPMASLLAGSSTPLLSAGTPGLLPTASAPPLLPAGALVAPSLGNNTSLMAAAAAAAAVAAAGGPPVLTAQTNPFLSLSGAEGSGGGPKGGTADKGASANQEKG.

The PHD-type 1 zinc-finger motif lies at 5 to 57 (VGGCCVCSDERGWAENPLVYCDGHACSVAVHQACYGIVQVPTGPWFCRKCESQ). A C2HC pre-PHD-type zinc finger spans residues 62-95 (RVRCELCPHKDGALKRTDNGGWAHVVCALYIPEV). The PHD-type 2 zinc finger occupies 118-181 (KTCYICEEQG…KYCGYCKYHF (64 aa)). Residues 185–500 (KTSRHSSGGG…GGPAAPSLPS (316 aa)) form a disordered region. Positions 191–212 (SGGGGGGAGGGGGSMGGGGSGF) are enriched in gly residues. The segment covering 231–255 (PTHHERGQKKSRKDKERLKQKHKKR) has biased composition (basic residues). S258 carries the post-translational modification Phosphoserine. Pro residues predominate over residues 258-268 (SPPSILTPPVV). Positions 282–300 (SHHEASTQETSESSRESKG) are enriched in basic and acidic residues. The segment covering 301 to 316 (KKSSSHSLSHKGKKLS) has biased composition (basic residues). The segment covering 317-340 (SGKGVSSFTSASSSSSSSSSSSGG) has biased composition (low complexity). Positions 345-354 (AVSSLQSSPD) are enriched in polar residues. Residues 374-388 (APAPSAPPSPSAPEP) show a composition bias toward pro residues. Phosphoserine occurs at positions 378 and 423. Positions 410–425 (STTTSSSGRARAPSPG) are enriched in low complexity. T451 is modified (phosphothreonine). Over residues 465–484 (EKKHKASKRSRHGPGRPKGS) the composition is skewed to basic residues. The segment at 729–764 (LQKENQRLQEQILSLTAKKERLQILNVQLSVPFPAL) is leucine-zipper. 2 disordered regions span residues 775 to 871 (VPGP…RAPG) and 1060 to 1093 (QTNP…QEKG). A compositionally biased stretch (low complexity) spans 787 to 796 (SSDSLSTSKS). The span at 804 to 813 (GLDNSLSTSS) shows a compositional bias: polar residues. Composition is skewed to low complexity over residues 818-832 (SGCP…SFHS) and 839-853 (LLQQ…ALPG).

As to quaternary structure, interacts with histone H3; interaction is necessary for MLLT6 binding to nucleosomes; interaction is inhibited by histone H3 'Lys-27' methylations (H3K27me1, H3K27me2 and H3K27me3).

The protein localises to the nucleus. This Homo sapiens (Human) protein is Protein AF-17 (MLLT6).